Reading from the N-terminus, the 249-residue chain is 2,3-bisphosphoglycerate-dependent phosphoglycerate mutase (249 aa).

Residues 11-18 (RHGESDWN), 24-25 (TG), R63, 90-93 (ERHY), K101, 117-118 (RR), and 184-185 (GN) each bind substrate. H12 serves as the catalytic Tele-phosphohistidine intermediate. E90 acts as the Proton donor/acceptor in catalysis.

Belongs to the phosphoglycerate mutase family. BPG-dependent PGAM subfamily.

It carries out the reaction (2R)-2-phosphoglycerate = (2R)-3-phosphoglycerate. It participates in carbohydrate degradation; glycolysis; pyruvate from D-glyceraldehyde 3-phosphate: step 3/5. Its function is as follows. Catalyzes the interconversion of 2-phosphoglycerate and 3-phosphoglycerate. This chain is 2,3-bisphosphoglycerate-dependent phosphoglycerate mutase, found in Mycobacterium bovis (strain BCG / Pasteur 1173P2).